We begin with the raw amino-acid sequence, 473 residues long: Digalactosyldiacylglycerol synthase 2, chloroplastic (473 aa).

Interaction with the membrane lipid bilayer regions lie at residues 130 to 148 and 227 to 245; these read LTWFHHGQKWKTKFNYVIG and QPFTKGAYYIGKMVWSKGY.

The protein belongs to the glycosyltransferase group 1 family. Glycosyltransferase 4 subfamily. In terms of tissue distribution, expressed in leaves, flowers and roots, but not in stems and siliques.

It localises to the plastid. Its subcellular location is the chloroplast outer membrane. It carries out the reaction a 1,2-diacyl-3-O-(beta-D-galactosyl)-sn-glycerol + UDP-alpha-D-galactose = a 1,2-diacyl-3-O-[alpha-D-galactosyl-(1-&gt;6)-beta-D-galactosyl]-sn-glycerol + UDP + H(+). Stimulated by anionic phospholipids. In terms of biological role, involved in the synthesis of diacylglycerol galactolipids that are specifically found in thylakoid membranes. Specific for alpha-glycosidic linkages. During phosphate shortage, involved in the biosynthesis of digalactosyldiacylglycerol (DGDG) which rescues the limitation of phospholipids. The protein is Digalactosyldiacylglycerol synthase 2, chloroplastic of Arabidopsis thaliana (Mouse-ear cress).